The primary structure comprises 483 residues: Phosphoglucosamine mutase (483 aa).

Serine 131 functions as the Phosphoserine intermediate in the catalytic mechanism. The Mg(2+) site is built by serine 131, aspartate 272, aspartate 274, and aspartate 276. Serine 131 carries the post-translational modification Phosphoserine.

It belongs to the phosphohexose mutase family. The cofactor is Mg(2+). Post-translationally, activated by phosphorylation.

The enzyme catalyses alpha-D-glucosamine 1-phosphate = D-glucosamine 6-phosphate. Functionally, catalyzes the conversion of glucosamine-6-phosphate to glucosamine-1-phosphate. In Magnetococcus marinus (strain ATCC BAA-1437 / JCM 17883 / MC-1), this protein is Phosphoglucosamine mutase.